The sequence spans 150 residues: Large ribosomal subunit protein bL9 (150 aa).

It belongs to the bacterial ribosomal protein bL9 family.

Binds to the 23S rRNA. This chain is Large ribosomal subunit protein bL9, found in Verminephrobacter eiseniae (strain EF01-2).